The sequence spans 317 residues: Lipoyl synthase (317 aa).

Residues cysteine 55, cysteine 60, cysteine 66, cysteine 81, cysteine 85, cysteine 88, and serine 292 each contribute to the [4Fe-4S] cluster site. The Radical SAM core domain maps to 67 to 281 (WEDREATFLI…ERYATEIGFA (215 aa)).

This sequence belongs to the radical SAM superfamily. Lipoyl synthase family. [4Fe-4S] cluster is required as a cofactor.

It is found in the cytoplasm. It catalyses the reaction [[Fe-S] cluster scaffold protein carrying a second [4Fe-4S](2+) cluster] + N(6)-octanoyl-L-lysyl-[protein] + 2 oxidized [2Fe-2S]-[ferredoxin] + 2 S-adenosyl-L-methionine + 4 H(+) = [[Fe-S] cluster scaffold protein] + N(6)-[(R)-dihydrolipoyl]-L-lysyl-[protein] + 4 Fe(3+) + 2 hydrogen sulfide + 2 5'-deoxyadenosine + 2 L-methionine + 2 reduced [2Fe-2S]-[ferredoxin]. It participates in protein modification; protein lipoylation via endogenous pathway; protein N(6)-(lipoyl)lysine from octanoyl-[acyl-carrier-protein]: step 2/2. In terms of biological role, catalyzes the radical-mediated insertion of two sulfur atoms into the C-6 and C-8 positions of the octanoyl moiety bound to the lipoyl domains of lipoate-dependent enzymes, thereby converting the octanoylated domains into lipoylated derivatives. The polypeptide is Lipoyl synthase (Mycolicibacterium gilvum (strain PYR-GCK) (Mycobacterium gilvum (strain PYR-GCK))).